Reading from the N-terminus, the 439-residue chain is Xaa-Pro dipeptidase (439 aa).

Mn(2+) contacts are provided by aspartate 244, aspartate 255, histidine 335, glutamate 380, and glutamate 419.

The protein belongs to the peptidase M24B family. Bacterial-type prolidase subfamily. It depends on Mn(2+) as a cofactor.

The catalysed reaction is Xaa-L-Pro dipeptide + H2O = an L-alpha-amino acid + L-proline. Splits dipeptides with a prolyl residue in the C-terminal position. This Shewanella amazonensis (strain ATCC BAA-1098 / SB2B) protein is Xaa-Pro dipeptidase.